The sequence spans 321 residues: Probable 2-oxoglutarate-dependent dioxygenase AOP1.2 (321 aa).

One can recognise a Fe2OG dioxygenase domain in the interval 165-270 (TYYLTRLMKY…RYSTGLFSIP (106 aa)). H194, D196, and H251 together coordinate Fe cation. R261 provides a ligand contact to 2-oxoglutarate.

It belongs to the iron/ascorbate-dependent oxidoreductase family. The cofactor is Fe(2+).

Functionally, probable 2-oxoglutarate-dependent dioxygenase that may be involved in glucosinolates biosynthesis. May play a role in the production of aliphatic glucosinolates. The sequence is that of Probable 2-oxoglutarate-dependent dioxygenase AOP1.2 (AOP1.2) from Arabidopsis thaliana (Mouse-ear cress).